Reading from the N-terminus, the 366-residue chain is Protein sigma-NS (366 aa).

The important for ssRNA-binding and formation of complexes stretch occupies residues 1–11 (MASSLRAAISK).

Belongs to the orthoreovirus sigma-NS protein family. In terms of assembly, homooligomer; in presence of RNA. Interacts with protein mu-NS; this interaction allows the localization of sigma-NS to the viral factories. Interacts with host G3BP1 (via C-terminus); this interaction induces the relocalization of G3BP1 and other SG proteins to the viral factories periphery.

Its subcellular location is the host cytoplasm. Its function is as follows. Protein that binds to ssRNA and participates with protein mu-NS in forming the matrix of viral factories, which are large inclusions in the host cytoplasm where replication intermediates are assembled and viral RNA replication takes place. Plays a role in the inhibition of the integrated stress response (ISR) to escape from host cell translational shutoff. Participates in the disruption of stress granules (SG) through its association with host G3BP1 and mu-NS. This is Protein sigma-NS (S3) from Mammalia (T2J).